The following is a 419-amino-acid chain: Farnesyl pyrophosphate synthase (419 aa).

Met1 is modified (N-acetylmethionine). Residues Lys123, Arg126, and Gln162 each coordinate isopentenyl diphosphate. Residue Lys123 is modified to N6-(2-hydroxyisobutyryl)lysine; alternate. N6-acetyllysine; alternate is present on Lys123. The Mg(2+) site is built by Asp169 and Asp173. Arg178 serves as a coordination point for dimethylallyl diphosphate. Arg179 contacts isopentenyl diphosphate. Lys266, Thr267, Gln306, Lys323, and Lys332 together coordinate dimethylallyl diphosphate. Position 353 is an N6-acetyllysine (Lys353).

This sequence belongs to the FPP/GGPP synthase family. In terms of assembly, homodimer. Interacts with RSAD2. (Microbial infection) Interacts with HTLV-1 protein p13(II). It depends on Mg(2+) as a cofactor.

Its subcellular location is the cytoplasm. The catalysed reaction is isopentenyl diphosphate + dimethylallyl diphosphate = (2E)-geranyl diphosphate + diphosphate. It catalyses the reaction isopentenyl diphosphate + (2E)-geranyl diphosphate = (2E,6E)-farnesyl diphosphate + diphosphate. The protein operates within isoprenoid biosynthesis; farnesyl diphosphate biosynthesis; farnesyl diphosphate from geranyl diphosphate and isopentenyl diphosphate: step 1/1. It participates in isoprenoid biosynthesis; geranyl diphosphate biosynthesis; geranyl diphosphate from dimethylallyl diphosphate and isopentenyl diphosphate: step 1/1. Inactivated by interferon-induced RSAD2. This inactivation may result of disruption of lipid rafts at the plasma membrane, and thus have an antiviral effect since many enveloped viruses need lipid rafts to bud efficiently out of the cell. Key enzyme in isoprenoid biosynthesis which catalyzes the formation of farnesyl diphosphate (FPP), a precursor for several classes of essential metabolites including sterols, dolichols, carotenoids, and ubiquinones. FPP also serves as substrate for protein farnesylation and geranylgeranylation. Catalyzes the sequential condensation of isopentenyl pyrophosphate with the allylic pyrophosphates, dimethylallyl pyrophosphate, and then with the resultant geranylpyrophosphate to the ultimate product farnesyl pyrophosphate. The protein is Farnesyl pyrophosphate synthase of Homo sapiens (Human).